The following is a 418-amino-acid chain: Light-independent protochlorophyllide reductase subunit N (418 aa).

The [4Fe-4S] cluster site is built by cysteine 17, cysteine 42, and cysteine 103.

Belongs to the BchN/ChlN family. As to quaternary structure, protochlorophyllide reductase is composed of three subunits; ChlL, ChlN and ChlB. Forms a heterotetramer of two ChlB and two ChlN subunits. Requires [4Fe-4S] cluster as cofactor.

It catalyses the reaction chlorophyllide a + oxidized 2[4Fe-4S]-[ferredoxin] + 2 ADP + 2 phosphate = protochlorophyllide a + reduced 2[4Fe-4S]-[ferredoxin] + 2 ATP + 2 H2O. It participates in porphyrin-containing compound metabolism; chlorophyll biosynthesis (light-independent). In terms of biological role, component of the dark-operative protochlorophyllide reductase (DPOR) that uses Mg-ATP and reduced ferredoxin to reduce ring D of protochlorophyllide (Pchlide) to form chlorophyllide a (Chlide). This reaction is light-independent. The NB-protein (ChlN-ChlB) is the catalytic component of the complex. The sequence is that of Light-independent protochlorophyllide reductase subunit N from Prochlorococcus marinus (strain MIT 9313).